The sequence spans 151 residues: Large-conductance mechanosensitive channel (151 aa).

2 consecutive transmembrane segments (helical) span residues Val-14–Leu-34 and Gly-85–Val-105.

Belongs to the MscL family. Homopentamer.

It localises to the cell inner membrane. In terms of biological role, channel that opens in response to stretch forces in the membrane lipid bilayer. May participate in the regulation of osmotic pressure changes within the cell. The sequence is that of Large-conductance mechanosensitive channel from Chlorobaculum tepidum (strain ATCC 49652 / DSM 12025 / NBRC 103806 / TLS) (Chlorobium tepidum).